A 716-amino-acid chain; its full sequence is Polyribonucleotide nucleotidyltransferase (716 aa).

2 residues coordinate Mg(2+): Asp490 and Asp496. The KH domain maps to 556 to 615 (PKIETLTIPTDKIREVIGSGGKVIREIVETSGAKVDINDDGVIKIASNDQAAIKKAYDMI). The region spanning 625 to 693 (GQIYTGKVVK…ERGKVRLGMK (69 aa)) is the S1 motif domain. Residues 695 to 716 (VDQETGQEIQPEKKEREEAGEA) are disordered. Positions 704-716 (QPEKKEREEAGEA) are enriched in basic and acidic residues.

It belongs to the polyribonucleotide nucleotidyltransferase family. It depends on Mg(2+) as a cofactor.

Its subcellular location is the cytoplasm. The catalysed reaction is RNA(n+1) + phosphate = RNA(n) + a ribonucleoside 5'-diphosphate. Involved in mRNA degradation. Catalyzes the phosphorolysis of single-stranded polyribonucleotides processively in the 3'- to 5'-direction. In Cereibacter sphaeroides (strain KD131 / KCTC 12085) (Rhodobacter sphaeroides), this protein is Polyribonucleotide nucleotidyltransferase.